A 183-amino-acid polypeptide reads, in one-letter code: I-kappa-B like protein N2 (183 aa).

2 ANK repeats span residues 62–95 (DGNTCLHEAALRNKGPQAIRIMEKLIEYGADLNL) and 99–129 (CHKPVLHVAVERNDYELVAWICQQPGINLEA). The tract at residues 163-183 (PRQDGSSEDEVSDSEEKSDSE) is disordered.

The protein belongs to the polydnaviridae I-Kappa-B like protein family.

Suppresses the host immune response through NF-kappa-B inactivation. Possesses ankyrin repeat domains required for NF-kappa-B binding but lacks the regulatory regions required for dissociation from NF-kappa-B and degradation. Therefore, prevents host NF-kappa-B release and subsequent activation. The protein is I-kappa-B like protein N2 (N5) of Microplitis demolitor (Parasitoid wasp).